The chain runs to 525 residues: Chromosomal replication initiator protein DnaA (525 aa).

The tract at residues 1 to 71 (MNDFWQHCSA…SDLAREFWNT (71 aa)) is domain I, interacts with DnaA modulators. The interval 71 to 188 (TPIEVQFVLD…GEADSMYERS (118 aa)) is domain II. A disordered region spans residues 160–182 (AAAGRRTWRPGPGAAPANGGEAD). Low complexity predominate over residues 169-181 (PGPGAAPANGGEA). The interval 189-405 (KLNPVLTFDN…GALRKILAYS (217 aa)) is domain III, AAA+ region. Residues Gly-233, Gly-235, Lys-236, and Thr-237 each contribute to the ATP site. The segment at 406–525 (KFHGREISIE…LHVLEQTLKG (120 aa)) is domain IV, binds dsDNA.

This sequence belongs to the DnaA family. In terms of assembly, oligomerizes as a right-handed, spiral filament on DNA at oriC.

The protein localises to the cytoplasm. Plays an essential role in the initiation and regulation of chromosomal replication. ATP-DnaA binds to the origin of replication (oriC) to initiate formation of the DNA replication initiation complex once per cell cycle. Binds the DnaA box (a 9 base pair repeat at the origin) and separates the double-stranded (ds)DNA. Forms a right-handed helical filament on oriC DNA; dsDNA binds to the exterior of the filament while single-stranded (ss)DNA is stabiized in the filament's interior. The ATP-DnaA-oriC complex binds and stabilizes one strand of the AT-rich DNA unwinding element (DUE), permitting loading of DNA polymerase. After initiation quickly degrades to an ADP-DnaA complex that is not apt for DNA replication. Binds acidic phospholipids. The polypeptide is Chromosomal replication initiator protein DnaA (Burkholderia orbicola (strain MC0-3)).